The chain runs to 585 residues: Lipoprotein LpqB (585 aa).

The first 17 residues, 1–17, serve as a signal peptide directing secretion; sequence MGRKLLGLLMLAVLLAG. Cys18 carries N-palmitoyl cysteine lipidation. Residue Cys18 is the site of S-diacylglycerol cysteine attachment. Disordered regions lie at residues 24–48 and 560–585; these read SSAPQAIGTVERPAPSNLPKPTPGM and PSADGQQGWSEVPGLTVPGAAPVLPG.

It belongs to the LpqB lipoprotein family.

The protein localises to the cell membrane. This Mycolicibacterium paratuberculosis (strain ATCC BAA-968 / K-10) (Mycobacterium paratuberculosis) protein is Lipoprotein LpqB.